Reading from the N-terminus, the 111-residue chain is Ciprofloxacin tolerance protein (111 aa).

Over 1-5 the chain is Periplasmic; the sequence is MVTAN. Residues 6–26 form a helical membrane-spanning segment; sequence FAAIAGLSLIAVALVAVFFSP. Residues 27-30 lie on the Cytoplasmic side of the membrane; sequence YRRW. A helical transmembrane segment spans residues 31–51; the sequence is LGFMLAGMFFWGLLEVVRFGV. The Periplasmic portion of the chain corresponds to 52–58; sequence QVTFEMP. The helical transmembrane segment at 59–79 threads the bilayer; it reads VTYSYLTALSLAMVMVTFVLL. Residues 80 to 111 lie on the Cytoplasmic side of the membrane; it reads REDKQAQKALANRQYIEHTPVYEDDQQQCSSR.

Its subcellular location is the cell inner membrane. May play a role in cellular filamentation, especially in response to ciprofloxacin. Increased expression confers tolerance to the antibiotic ciprofloxacin. The protein is Ciprofloxacin tolerance protein of Acinetobacter baumannii.